The following is a 201-amino-acid chain: IMP cyclohydrolase (201 aa).

The protein belongs to the archaeal IMP cyclohydrolase family.

The enzyme catalyses IMP + H2O = 5-formamido-1-(5-phospho-D-ribosyl)imidazole-4-carboxamide. The protein operates within purine metabolism; IMP biosynthesis via de novo pathway; IMP from 5-formamido-1-(5-phospho-D-ribosyl)imidazole-4-carboxamide: step 1/1. Functionally, catalyzes the cyclization of 5-formylamidoimidazole-4-carboxamide ribonucleotide to IMP. In Methanococcus maripaludis (strain C7 / ATCC BAA-1331), this protein is IMP cyclohydrolase.